The sequence spans 354 residues: Diaminopimelate epimerase, chloroplastic (354 aa).

The transit peptide at 1-44 (MSSATAAATATIAAAAAKLAATPAPAPSRRRLTLRGNPTARRCV) directs the protein to the chloroplast. Active-site residues include Cys142 and Cys297.

It belongs to the diaminopimelate epimerase family.

The protein localises to the plastid. Its subcellular location is the chloroplast. The enzyme catalyses (2S,6S)-2,6-diaminopimelate = meso-2,6-diaminopimelate. It functions in the pathway amino-acid biosynthesis; L-lysine biosynthesis via DAP pathway; DL-2,6-diaminopimelate from LL-2,6-diaminopimelate: step 1/1. This Oryza sativa subsp. japonica (Rice) protein is Diaminopimelate epimerase, chloroplastic (DAPF).